The primary structure comprises 299 residues: 33 kDa chaperonin (299 aa).

Cystine bridges form between Cys-234-Cys-236 and Cys-268-Cys-271.

Belongs to the HSP33 family. In terms of processing, under oxidizing conditions two disulfide bonds are formed involving the reactive cysteines. Under reducing conditions zinc is bound to the reactive cysteines and the protein is inactive.

The protein localises to the cytoplasm. Its function is as follows. Redox regulated molecular chaperone. Protects both thermally unfolding and oxidatively damaged proteins from irreversible aggregation. Plays an important role in the bacterial defense system toward oxidative stress. The protein is 33 kDa chaperonin of Pseudomonas putida (strain GB-1).